The chain runs to 685 residues: MGQEKLYIEKELSWLAFNERVLQEAADKSNPLIERMRFLGIYSNNLDEFYKVRFAELKRRIIISEEQGLNSHSRHLLGKIQSRVLKADQEFDGLYNELLLEMARNQIFLINERQLSVNQQNWLRHYFKHYLRQHITPILINRETDLVQFLKDDYTYLAVEIIRGESIRYPLLEIPSDKVPRFVNLPPETPRRRKPMILLDNILRYCLDDIFKGFFDYDALNAYSMKMTRDAEYDLVHEMEASLMELMSSSLKQPDAEPVRFVYQRDMPDAMVEMLRDKLTISRYDSIVPGGRYHNFKDFIGFPNVGKANLVNKPLPRLRHLWFDKFRNGFDAIRERDVLLYYPYHTFEHVLELLRQASFDPSVLAIKINIYRVAKDSRIIDAMIHAAHNAKKVTVVVELQARFDEEANIHWARRLTEAGVHVIFSAPGLKIHAKLFLISRKEGDDVVRYAHIGTGNFNEKTSLIYTDYSLLTADARITNEVRRVFNFIENPYRPVSFDYLLVSPQNSRRLLYDMIDKEIANAQKGLSSGITLKLNNLVDKGLVDRLYAASSSGVPVNLLIRGMCSLIPELEGISDNIRVISIVDRYLEHDRIYIFDNAGDKQVYLSSADWMTRNIDYRIEVAAPLLDPRLKQQILDIIEILFSDTVKARYIDKELSNRYVPRGNRRKVRSQLAIYDYIKSLEQPD.

N45 is an ATP binding site. Positions 372 and 402 each coordinate Mg(2+). Residues 427 to 461 form the PLD phosphodiesterase 1 domain; it reads PGLKIHAKLFLISRKEGDDVVRYAHIGTGNFNEKT. The Phosphohistidine intermediate role is filled by H432. Y465, R561, and H589 together coordinate ATP. The PLD phosphodiesterase 2 domain maps to 584–614; that stretch reads DRYLEHDRIYIFDNAGDKQVYLSSADWMTRN.

The protein belongs to the polyphosphate kinase 1 (PPK1) family. Requires Mg(2+) as cofactor. An intermediate of this reaction is the autophosphorylated ppk in which a phosphate is covalently linked to a histidine residue through a N-P bond.

The catalysed reaction is [phosphate](n) + ATP = [phosphate](n+1) + ADP. Its function is as follows. Catalyzes the reversible transfer of the terminal phosphate of ATP to form a long-chain polyphosphate (polyP). This Klebsiella pneumoniae protein is Polyphosphate kinase.